The sequence spans 863 residues: Aminopeptidase N (863 aa).

Substrate-binding positions include Glu-124 and 263 to 267 (GAMEN). Position 299 (His-299) interacts with Zn(2+). Residue Glu-300 is the Proton acceptor of the active site. The Zn(2+) site is built by His-303 and Glu-322.

The protein belongs to the peptidase M1 family. Zn(2+) serves as cofactor.

It carries out the reaction Release of an N-terminal amino acid, Xaa-|-Yaa- from a peptide, amide or arylamide. Xaa is preferably Ala, but may be most amino acids including Pro (slow action). When a terminal hydrophobic residue is followed by a prolyl residue, the two may be released as an intact Xaa-Pro dipeptide.. Functionally, aminopeptidase N is involved in the degradation of intracellular peptides generated by protein breakdown during normal growth as well as in response to nutrient starvation. This chain is Aminopeptidase N (pepN), found in Caulobacter vibrioides (strain ATCC 19089 / CIP 103742 / CB 15) (Caulobacter crescentus).